Consider the following 799-residue polypeptide: Pentatricopeptide repeat-containing protein At2g26790, mitochondrial (799 aa).

The transit peptide at 1-27 directs the protein to the mitochondrion; the sequence is MRFSPTFFLLSQLRLTRRRAATSSRFY. PPR repeat units lie at residues 145-179, 180-214, 215-250, 251-278, 282-316, 317-351, 352-386, 387-421, 422-456, 457-491, 492-522, 523-553, 555-589, 590-624, 625-659, 660-695, 708-742, and 743-777; these read LIRVSGALVKAYVSLGMFDEATDVLFQSKRLDCVV, DIKACNFLMNRMTEFGKIGMLMTLFKQLKQLGLCA, NEYTYAIVVKALCRKGNLEEAAMLLIENESVFGYKT, FINGLCVTGETEKAVALILELIDRKYLA, LRAVLGMVVRGFCNEMKMKAAESVIIEMEEIGFGL, DVYACLAVIDRYCKNMNLPEALGFLDKMLGKGLKV, NCVIVSLILQCYCKMDMCLEALEKFKEFRDMNIFL, DRVCYNVAFDALSKLGRVEEAFELLQEMKDRGIVP, DVINYTTLIDGYCLQGKVVDALDLIDEMIGNGMSP, DLITYNVLVSGLARNGHEEEVLEIYERMKAEGPKP, NAVTNSVIIEGLCFARKVKEAEDFFSSLEQK, CPENKASFVKGYCEAGLSKKAYKAFVRLEYP, RKSVYIKLFFSLCIEGYLEKAHDVLKKMSAYRVEP, GRSMCGKMIGAFCKLNNVREAQVLFDTMVERGLIP, DLFTYTIMIHTYCRLNELQKAESLFEDMKQRGIKP, DVVTYTVLLDRYLKLDPEHHETCSVQGEVGKRKASE, DVVCYTVLIDRQCKMNNLEQAAELFDRMIDSGLEP, and DMVAYTTLISSYFRKGYIDMAVTLVTELSKKYNIP.

It belongs to the PPR family. P subfamily.

The protein localises to the mitochondrion. This is Pentatricopeptide repeat-containing protein At2g26790, mitochondrial from Arabidopsis thaliana (Mouse-ear cress).